A 305-amino-acid chain; its full sequence is tRNA pseudouridine synthase B (305 aa).

Catalysis depends on D48, which acts as the Nucleophile.

The protein belongs to the pseudouridine synthase TruB family. Type 1 subfamily.

The enzyme catalyses uridine(55) in tRNA = pseudouridine(55) in tRNA. Its function is as follows. Responsible for synthesis of pseudouridine from uracil-55 in the psi GC loop of transfer RNAs. This is tRNA pseudouridine synthase B from Stutzerimonas stutzeri (strain A1501) (Pseudomonas stutzeri).